The chain runs to 261 residues: 1-(5-phosphoribosyl)-5-[(5-phosphoribosylamino)methylideneamino] imidazole-4-carboxamide isomerase (261 aa).

The active-site Proton acceptor is Asp7. Residue Asp129 is the Proton donor of the active site.

It belongs to the HisA/HisF family.

Its subcellular location is the cytoplasm. It catalyses the reaction 1-(5-phospho-beta-D-ribosyl)-5-[(5-phospho-beta-D-ribosylamino)methylideneamino]imidazole-4-carboxamide = 5-[(5-phospho-1-deoxy-D-ribulos-1-ylimino)methylamino]-1-(5-phospho-beta-D-ribosyl)imidazole-4-carboxamide. It functions in the pathway amino-acid biosynthesis; L-histidine biosynthesis; L-histidine from 5-phospho-alpha-D-ribose 1-diphosphate: step 4/9. The polypeptide is 1-(5-phosphoribosyl)-5-[(5-phosphoribosylamino)methylideneamino] imidazole-4-carboxamide isomerase (Colwellia psychrerythraea (strain 34H / ATCC BAA-681) (Vibrio psychroerythus)).